We begin with the raw amino-acid sequence, 363 residues long: Small ribosomal subunit biogenesis GTPase RsgA (363 aa).

The region spanning His-112–Leu-268 is the CP-type G domain. Residues Thr-157–Asp-160 and Gly-210–Thr-218 contribute to the GTP site. Cys-291, Cys-296, His-298, and Cys-304 together coordinate Zn(2+). Positions Arg-340–Arg-363 are disordered.

Belongs to the TRAFAC class YlqF/YawG GTPase family. RsgA subfamily. Monomer. Associates with 30S ribosomal subunit, binds 16S rRNA. Zn(2+) is required as a cofactor.

Its subcellular location is the cytoplasm. Its function is as follows. One of several proteins that assist in the late maturation steps of the functional core of the 30S ribosomal subunit. Helps release RbfA from mature subunits. May play a role in the assembly of ribosomal proteins into the subunit. Circularly permuted GTPase that catalyzes slow GTP hydrolysis, GTPase activity is stimulated by the 30S ribosomal subunit. This is Small ribosomal subunit biogenesis GTPase RsgA from Xanthomonas campestris pv. campestris (strain 8004).